Here is an 857-residue protein sequence, read N- to C-terminus: DNA mismatch repair protein MutS (857 aa).

Gly603–Ser610 lines the ATP pocket.

It belongs to the DNA mismatch repair MutS family.

In terms of biological role, this protein is involved in the repair of mismatches in DNA. It is possible that it carries out the mismatch recognition step. This protein has a weak ATPase activity. The polypeptide is DNA mismatch repair protein MutS (Methanothrix thermoacetophila (strain DSM 6194 / JCM 14653 / NBRC 101360 / PT) (Methanosaeta thermophila)).